We begin with the raw amino-acid sequence, 1390 residues long: DNA-directed RNA polymerase subunit beta' (1390 aa).

Zn(2+) is bound by residues C70, C72, C85, and C88. Residues D460, D462, and D464 each contribute to the Mg(2+) site. Residues C814, C888, C895, and C898 each coordinate Zn(2+).

Belongs to the RNA polymerase beta' chain family. As to quaternary structure, the RNAP catalytic core consists of 2 alpha, 1 beta, 1 beta' and 1 omega subunit. When a sigma factor is associated with the core the holoenzyme is formed, which can initiate transcription. Requires Mg(2+) as cofactor. Zn(2+) serves as cofactor.

It carries out the reaction RNA(n) + a ribonucleoside 5'-triphosphate = RNA(n+1) + diphosphate. Functionally, DNA-dependent RNA polymerase catalyzes the transcription of DNA into RNA using the four ribonucleoside triphosphates as substrates. The polypeptide is DNA-directed RNA polymerase subunit beta' (Pseudoalteromonas translucida (strain TAC 125)).